We begin with the raw amino-acid sequence, 452 residues long: UDP-N-acetylmuramoylalanine--D-glutamate ligase (452 aa).

119–125 (GSNGKTT) serves as a coordination point for ATP.

The protein belongs to the MurCDEF family.

It is found in the cytoplasm. It carries out the reaction UDP-N-acetyl-alpha-D-muramoyl-L-alanine + D-glutamate + ATP = UDP-N-acetyl-alpha-D-muramoyl-L-alanyl-D-glutamate + ADP + phosphate + H(+). It functions in the pathway cell wall biogenesis; peptidoglycan biosynthesis. Cell wall formation. Catalyzes the addition of glutamate to the nucleotide precursor UDP-N-acetylmuramoyl-L-alanine (UMA). This chain is UDP-N-acetylmuramoylalanine--D-glutamate ligase, found in Streptococcus pyogenes serotype M5 (strain Manfredo).